The sequence spans 693 residues: Periplasmic alpha-galactoside-binding protein (693 aa).

The N-terminal stretch at 1–20 (MKTHRLNMTASLLIGISAFA) is a signal peptide.

Belongs to the bacterial solute-binding protein 5 family.

Its subcellular location is the periplasm. Functionally, involved in the transport of alpha-galactosides. Required for the utilization of raffinose and melibiose. Probably acts as a periplasmic substrate-binding protein for a transport system. The sequence is that of Periplasmic alpha-galactoside-binding protein from Rhizobium meliloti (strain 1021) (Ensifer meliloti).